Reading from the N-terminus, the 94-residue chain is Pyrimidine/purine nucleoside phosphorylase (94 aa).

The protein belongs to the nucleoside phosphorylase PpnP family.

It catalyses the reaction a purine D-ribonucleoside + phosphate = a purine nucleobase + alpha-D-ribose 1-phosphate. The catalysed reaction is adenosine + phosphate = alpha-D-ribose 1-phosphate + adenine. It carries out the reaction cytidine + phosphate = cytosine + alpha-D-ribose 1-phosphate. The enzyme catalyses guanosine + phosphate = alpha-D-ribose 1-phosphate + guanine. It catalyses the reaction inosine + phosphate = alpha-D-ribose 1-phosphate + hypoxanthine. The catalysed reaction is thymidine + phosphate = 2-deoxy-alpha-D-ribose 1-phosphate + thymine. It carries out the reaction uridine + phosphate = alpha-D-ribose 1-phosphate + uracil. The enzyme catalyses xanthosine + phosphate = alpha-D-ribose 1-phosphate + xanthine. Its function is as follows. Catalyzes the phosphorolysis of diverse nucleosides, yielding D-ribose 1-phosphate and the respective free bases. Can use uridine, adenosine, guanosine, cytidine, thymidine, inosine and xanthosine as substrates. Also catalyzes the reverse reactions. This Aeromonas salmonicida (strain A449) protein is Pyrimidine/purine nucleoside phosphorylase.